The sequence spans 375 residues: Prophage integrase IntE (375 aa).

Positions 82-167 constitute a Core-binding (CB) domain; sequence ITTSTWLDRY…VLIDVFKEAQ (86 aa). The Tyr recombinase domain occupies 189 to 375; that stretch reads ITRQRLSLEE…RGKGWSKVAL (187 aa). Active-site residues include Arg226, Lys249, His330, Arg333, and His353. The interval 350–375 is disordered; the sequence is LLGHKTQQQTDRYHDDRGKGWSKVAL. Tyr362 serves as the catalytic O-(3'-phospho-DNA)-tyrosine intermediate.

It belongs to the 'phage' integrase family.

In terms of biological role, integrase from the cryptic lambdoid prophage e14. Integrase is necessary for integration of the phage into the host genome by site-specific recombination. In conjunction with excisionase, integrase is also necessary for excision of the prophage from the host genome. The sequence is that of Prophage integrase IntE (intE) from Escherichia coli (strain K12).